The primary structure comprises 466 residues: 3-isopropylmalate dehydratase large subunit (466 aa).

[4Fe-4S] cluster contacts are provided by Cys346, Cys406, and Cys409.

The protein belongs to the aconitase/IPM isomerase family. LeuC type 1 subfamily. Heterodimer of LeuC and LeuD. The cofactor is [4Fe-4S] cluster.

The enzyme catalyses (2R,3S)-3-isopropylmalate = (2S)-2-isopropylmalate. Its pathway is amino-acid biosynthesis; L-leucine biosynthesis; L-leucine from 3-methyl-2-oxobutanoate: step 2/4. Its function is as follows. Catalyzes the isomerization between 2-isopropylmalate and 3-isopropylmalate, via the formation of 2-isopropylmaleate. In Cytophaga hutchinsonii (strain ATCC 33406 / DSM 1761 / CIP 103989 / NBRC 15051 / NCIMB 9469 / D465), this protein is 3-isopropylmalate dehydratase large subunit.